Reading from the N-terminus, the 283-residue chain is MAPPTFADLGKSAKDLFNKGYNFGFLKIDSTTRAGDNKEVEFKSAASHNIGSGKLGGNLDVKYKIPQYGITLTEKWNTENQLGTVIEVNEQFGRGLKVTLDSLYAPHAGKRSGKVKLDWALPTARVTADVGVTSAPVINAAGVFSRDGWLIGAAATFDSSSNKLAATSLAFGHSTPQYTLHSFVINSTDFGASLYHKVASNVEVGTQLGWKVGGNGADYALATKYAPSRDLTVRAKVNSSSQVAVAATHSLSPALKLTLSTQFNLAANDAHKFGLGLEFDPSN.

Belongs to the eukaryotic mitochondrial porin family.

It localises to the mitochondrion outer membrane. Forms a channel through the cell membrane that allows diffusion of small hydrophilic molecules. Plays a role in maintaining mitochondrial morphology. In Caenorhabditis elegans, this protein is Probable voltage-dependent anion-selective channel.